A 254-amino-acid chain; its full sequence is UPF0603 protein YdjH (254 aa).

The signal sequence occupies residues 1-29 (MRGFFGKAIFVVLAVFIMMPLLGIEAVRA). The chain crosses the membrane as a helical span at residues 166–186 (IFFTWWFQLIAAIAVGGIAVS). Over residues 223 to 235 (VTRERKPSDKDSG) the composition is skewed to basic and acidic residues. A disordered region spans residues 223 to 254 (VTRERKPSDKDSGSDGGVTKGGTSYSGSRGSF). The span at 243 to 254 (GGTSYSGSRGSF) shows a compositional bias: polar residues.

This sequence belongs to the UPF0603 family.

It localises to the cell membrane. This Bacillus subtilis (strain 168) protein is UPF0603 protein YdjH (ydjH).